The chain runs to 155 residues: MAEQQAQPEQVEFNIQRVYVKDISFECPGSPNIFKKEWSPEVSMDIDTKSQKLEDNVFEVVLTLTTTAKVGEELAFLCEVQQAGIFSVGNLEGEQMAHCLNAFCPNILFPYARETVSSLVTRGTFPQLNLAPVNFDALFQQAVLRKQSEEAKLNS.

This sequence belongs to the SecB family. Homotetramer, a dimer of dimers. One homotetramer interacts with 1 SecA dimer.

It localises to the cytoplasm. Functionally, one of the proteins required for the normal export of preproteins out of the cell cytoplasm. It is a molecular chaperone that binds to a subset of precursor proteins, maintaining them in a translocation-competent state. It also specifically binds to its receptor SecA. The protein is Protein-export protein SecB of Psychromonas ingrahamii (strain DSM 17664 / CCUG 51855 / 37).